The primary structure comprises 168 residues: Shikimate kinase (168 aa).

An ATP-binding site is contributed by cysteine 10–threonine 15. Serine 14 lines the Mg(2+) pocket. Substrate is bound by residues aspartate 32, arginine 56, and glycine 78. Arginine 116 is an ATP binding site. Substrate is bound at residue arginine 133.

Belongs to the shikimate kinase family. Monomer. Mg(2+) is required as a cofactor.

It is found in the cytoplasm. The catalysed reaction is shikimate + ATP = 3-phosphoshikimate + ADP + H(+). The protein operates within metabolic intermediate biosynthesis; chorismate biosynthesis; chorismate from D-erythrose 4-phosphate and phosphoenolpyruvate: step 5/7. Its function is as follows. Catalyzes the specific phosphorylation of the 3-hydroxyl group of shikimic acid using ATP as a cosubstrate. This Aquifex aeolicus (strain VF5) protein is Shikimate kinase.